The chain runs to 230 residues: Ion-translocating oxidoreductase complex subunit E (230 aa).

The next 6 membrane-spanning stretches (helical) occupy residues 18-38, 39-59, 63-83, 86-106, 125-145, and 182-202; these read ALVQ…ATNA, LGLG…ISAL, TPAE…VSAV, LINA…PLIV, ALSA…MFVL, and PFLL…MLAV.

It belongs to the NqrDE/RnfAE family. In terms of assembly, the complex is composed of six subunits: RnfA, RnfB, RnfC, RnfD, RnfE and RnfG.

It localises to the cell inner membrane. Part of a membrane-bound complex that couples electron transfer with translocation of ions across the membrane. This is Ion-translocating oxidoreductase complex subunit E from Citrobacter koseri (strain ATCC BAA-895 / CDC 4225-83 / SGSC4696).